The following is a 187-amino-acid chain: Adenine phosphoribosyltransferase (187 aa).

133–137 (ATGGS) provides a ligand contact to AMP.

This sequence belongs to the purine/pyrimidine phosphoribosyltransferase family. In terms of assembly, homodimer. Mg(2+) serves as cofactor.

It is found in the cytoplasm. It localises to the nucleus. The catalysed reaction is AMP + diphosphate = 5-phospho-alpha-D-ribose 1-diphosphate + adenine. It functions in the pathway purine metabolism; AMP biosynthesis via salvage pathway; AMP from adenine: step 1/1. In terms of biological role, catalyzes a salvage reaction resulting in the formation of AMP, that is energically less costly than de novo synthesis. The polypeptide is Adenine phosphoribosyltransferase (APT1) (Eremothecium gossypii (strain ATCC 10895 / CBS 109.51 / FGSC 9923 / NRRL Y-1056) (Yeast)).